The sequence spans 237 residues: MAKSNNVYVVNGEEKVSTLAEVAKVLGVSRVSKKDVEEGKYDVVVEEAAVSLADTEEVVEEVVTEEEDILEGVEVVEDEEEEEAAEDVEEPTSEEDSEDEWEEGYPVATEVEEDEDEEIEYPEVGDFEDEKAIKKYIKGLTDEQLQAWCELEGAEWVENEHRNINRMRMAMAIKAVHFPELAKKPSSKKKSKYAEYTTEELVEMAIDNNVEVRDDKGNERILRMYTIIALREAGLIS.

The span at 73-103 (VEVVEDEEEEEAAEDVEEPTSEEDSEDEWEE) shows a compositional bias: acidic residues. Residues 73-105 (VEVVEDEEEEEAAEDVEEPTSEEDSEDEWEEGY) are disordered.

Functionally, hypothesized to function in the shutoff of host biosyntheses. But it seems dispensable both for host shutoff and for phage multiplication. Its shutoff function is probably not entirely specific to host activities. This Bacillus phage SP01 (Bacteriophage SP01) protein is E3 protein (44).